The chain runs to 103 residues: Large ribosomal subunit protein uL24 (103 aa).

Belongs to the universal ribosomal protein uL24 family. As to quaternary structure, part of the 50S ribosomal subunit.

One of two assembly initiator proteins, it binds directly to the 5'-end of the 23S rRNA, where it nucleates assembly of the 50S subunit. Functionally, one of the proteins that surrounds the polypeptide exit tunnel on the outside of the subunit. This Corynebacterium urealyticum (strain ATCC 43042 / DSM 7109) protein is Large ribosomal subunit protein uL24.